We begin with the raw amino-acid sequence, 752 residues long: Ribonucleases P/MRP protein subunit popl-1 (752 aa).

Residues 638 to 663 form a disordered region; it reads KTTKRKRVNRKKRESKKRRKIEQEKR. The span at 640–657 shows a compositional bias: basic residues; that stretch reads TKRKRVNRKKRESKKRRK.

In terms of assembly, component of nuclear RNase P and RNase MRP ribonucleoproteins. Several subunits of RNase P are also part of the RNase MRP complex.

Its subcellular location is the nucleus. The protein resides in the nucleolus. It carries out the reaction Endonucleolytic cleavage of RNA, removing 5'-extranucleotides from tRNA precursor.. Component of ribonuclease P, a ribonucleoprotein complex that generates mature tRNA molecules by cleaving their 5'-ends. Also a component of the MRP ribonuclease complex, which cleaves pre-rRNA sequences. This chain is Ribonucleases P/MRP protein subunit popl-1, found in Caenorhabditis elegans.